A 150-amino-acid polypeptide reads, in one-letter code: 1,4-dihydroxy-2-naphthoyl-CoA hydrolase (150 aa).

D19 is an active-site residue.

This sequence belongs to the 4-hydroxybenzoyl-CoA thioesterase family. DHNA-CoA hydrolase subfamily.

The enzyme catalyses 1,4-dihydroxy-2-naphthoyl-CoA + H2O = 1,4-dihydroxy-2-naphthoate + CoA + H(+). It participates in cofactor biosynthesis; phylloquinone biosynthesis. The protein operates within quinol/quinone metabolism; 1,4-dihydroxy-2-naphthoate biosynthesis; 1,4-dihydroxy-2-naphthoate from chorismate: step 7/7. Functionally, catalyzes the hydrolysis of 1,4-dihydroxy-2-naphthoyl-CoA (DHNA-CoA) to 1,4-dihydroxy-2-naphthoate (DHNA), a reaction involved in phylloquinone (vitamin K1) biosynthesis. This Prochlorococcus marinus (strain MIT 9215) protein is 1,4-dihydroxy-2-naphthoyl-CoA hydrolase.